The primary structure comprises 514 residues: RNA polymerase sigma factor SigA (514 aa).

Basic residues predominate over residues A135–S159. The tract at residues A135–A205 is disordered. The segment at L281 to T351 is sigma-70 factor domain-2. The Interaction with polymerase core subunit RpoC motif lies at D305–Q308. Residues E360–A436 are sigma-70 factor domain-3. The tract at residues V449–H502 is sigma-70 factor domain-4. The segment at residues L475 to S494 is a DNA-binding region (H-T-H motif).

The protein belongs to the sigma-70 factor family. RpoD/SigA subfamily. In terms of assembly, interacts transiently with the RNA polymerase catalytic core.

It is found in the cytoplasm. Sigma factors are initiation factors that promote the attachment of RNA polymerase to specific initiation sites and are then released. This sigma factor is the primary sigma factor during exponential growth. The chain is RNA polymerase sigma factor SigA from Streptomyces griseus.